A 237-amino-acid chain; its full sequence is N-alpha-acetyltransferase 40 (237 aa).

Gly-2 is lipidated: N-myristoyl glycine. The region spanning 63-216 (SGLEPATVDW…EDCSYEILSR (154 aa)) is the N-acetyltransferase domain. Residues Tyr-85, 127 to 129 (DVE), and Tyr-138 each bind substrate. Acetyl-CoA is bound by residues 140 to 142 (VQL) and 148 to 153 (RKGLGK). Thr-174 lines the substrate pocket. Asn-179 serves as a coordination point for acetyl-CoA. The substrate site is built by Ser-197 and Tyr-211.

This sequence belongs to the acetyltransferase family. NAA40 subfamily.

The protein resides in the cytoplasm. The protein localises to the nucleus. The enzyme catalyses N-terminal L-seryl-[histone H4] + acetyl-CoA = N-terminal N(alpha)-acetyl-L-seryl-[histone H4] + CoA + H(+). It carries out the reaction N-terminal L-seryl-[histone H2A] + acetyl-CoA = N-terminal N(alpha)-acetyl-L-seryl-[histone H2A] + CoA + H(+). Its function is as follows. N-alpha-acetyltransferase that specifically mediates the acetylation of the N-terminal residues of histones H4 and H2A. In contrast to other N-alpha-acetyltransferase, has a very specific selectivity for histones H4 and H2A N-terminus and specifically recognizes the 'Ser-Gly-Arg-Gly sequence'. Acts as a negative regulator of apoptosis. May play a role in hepatic lipid metabolism. This Mus musculus (Mouse) protein is N-alpha-acetyltransferase 40.